The primary structure comprises 506 residues: Maturase K (506 aa).

The protein belongs to the intron maturase 2 family. MatK subfamily.

The protein localises to the plastid. It is found in the chloroplast. Its function is as follows. Usually encoded in the trnK tRNA gene intron. Probably assists in splicing its own and other chloroplast group II introns. The chain is Maturase K from Angiopteris evecta (Mule's foot fern).